We begin with the raw amino-acid sequence, 2245 residues long: Myosin-J heavy chain (2245 aa).

The Myosin N-terminal SH3-like domain occupies 25–77 (QEGAGVWIPDQELGWIGADVIEHSETSADQVLVRTEDDREVKIPLSKVFQKNP). The Myosin motor domain occupies 81 to 821 (EGVDDLSFLS…QLASLEDMRL (741 aa)). 174–181 (GESGAGKT) contacts ATP. The disordered stretch occupies residues 646–672 (FTQSPGGHPQGNGGPTSSNTKGTSGSS). Low complexity predominate over residues 660–672 (PTSSNTKGTSGSS). An actin-binding region spans residues 669-749 (SGSSSMKFLS…GFPTRRLLSE (81 aa)). IQ domains are found at residues 824-851 (LDRS…RDAS), 872-901 (RTHS…ASLQ), and 943-972 (KLRG…EARS). Residues 973 to 1812 (LRTVQEQKNK…NYHMLEDRME (840 aa)) are a coiled coil. The disordered stretch occupies residues 1504–1524 (KKQLTQLQQQHEQSSTQLLLA). Low complexity predominate over residues 1506–1523 (QLTQLQQQHEQSSTQLLL). The Dilute domain occupies 1969–2188 (IDFIDQLQQS…IASICPPNKS (220 aa)).

The protein belongs to the TRAFAC class myosin-kinesin ATPase superfamily. Myosin family. In terms of assembly, homodimer that associates with six light chains.

The protein localises to the contractile vacuole. Processive motor protein that can move over long distances along F-actin without disassociating; processiveness depends on high physiological Mg(2+) concentrations. Presents a high actin affinity in the presence of ADP, fast ATP hydrolysis, and a high steady-state ATPase activity in the presence of actin that is rate limited by ADP release. Physiological decrease of free Mg(2+) ions leads to an increased rate of ADP release and shortening of the fraction of time it spends in the strong acting binding states. This is Myosin-J heavy chain (myoJ) from Dictyostelium discoideum (Social amoeba).